The following is a 451-amino-acid chain: LisH domain-containing protein C1711.05 (451 aa).

The LisH domain occupies 6–38; that stretch reads MKSKVCPLIYHFLQENGYVKTAQTFLKETGDKD. Residues 59-394 form a disordered region; sequence PYLTTEDVGK…VGDPSQWDFA (336 aa). Basic and acidic residues predominate over residues 73 to 98; the sequence is KESLEKSNDDSQKISKKGAPPEKAHS. The span at 99–120 shows a compositional bias: low complexity; it reads SSEASGSGSSSDESDSSSSESE. A compositionally biased stretch (acidic residues) spans 135–145; sequence SESESSSEDSD. Residues 146 to 174 are compositionally biased toward low complexity; it reads SSSSSSDSESESSSEGSDSSSSSSSSESE. The span at 189-199 shows a compositional bias: acidic residues; the sequence is SESESSSEDSD. Positions 200–228 are enriched in low complexity; it reads SSSSSSDSESESSSEGSDSSSSSSSSESE. Composition is skewed to acidic residues over residues 243-253 and 278-300; these read SESESSSEDSD and DSED…EDSD. The span at 301-319 shows a compositional bias: low complexity; it reads STSSSSDSDSSSSSEDGNS. Residues 320-332 are compositionally biased toward polar residues; sequence NTDTTTSGEVSAQ. Residues 333–343 show a composition bias toward low complexity; sequence SSTNSTSSEES. Residues 344-365 show a composition bias toward basic and acidic residues; sequence TSVKDEDSSKIHDKSLKRKHED. A compositionally biased stretch (low complexity) spans 369 to 380; that stretch reads STSTKSSRTTKT.

It is found in the nucleus. The protein localises to the nucleolus. The chain is LisH domain-containing protein C1711.05 from Schizosaccharomyces pombe (strain 972 / ATCC 24843) (Fission yeast).